The chain runs to 950 residues: Protein translocase subunit SecA 1 (950 aa).

ATP contacts are provided by residues Q83, 101–105, and D490; that span reads GEGKT. A disordered region spans residues 864–950; it reads EGGAGRKNAA…AKPPKSVKKR (87 aa). Positions 873–888 are enriched in basic and acidic residues; that stretch reads AAREEAPSRLRAKGIE.

It belongs to the SecA family. As to quaternary structure, monomer and homodimer. Part of the essential Sec protein translocation apparatus which comprises SecA, SecYEG and auxiliary proteins SecDF. Other proteins may also be involved.

The protein resides in the cell membrane. It is found in the cytoplasm. It catalyses the reaction ATP + H2O + cellular proteinSide 1 = ADP + phosphate + cellular proteinSide 2.. In terms of biological role, part of the Sec protein translocase complex. Interacts with the SecYEG preprotein conducting channel. Has a central role in coupling the hydrolysis of ATP to the transfer of proteins into and across the cell membrane, serving as an ATP-driven molecular motor driving the stepwise translocation of polypeptide chains across the membrane. The sequence is that of Protein translocase subunit SecA 1 from Mycobacterium ulcerans (strain Agy99).